Here is a 190-residue protein sequence, read N- to C-terminus: Ras-like GTP-binding protein RhoL (190 aa).

18 to 25 lines the GTP pocket; the sequence is GDGMVGKT. An Effector region motif is present at residues 40-48; it reads YIPTVFDNH. GTP contacts are provided by residues 65–69 and 123–126; these read DTAGQ and TKLD. A Cysteine methyl ester modification is found at Cys-187. Cys-187 is lipidated: S-geranylgeranyl cysteine. A propeptide spans 188-190 (removed in mature form); the sequence is KIL.

The protein belongs to the small GTPase superfamily. Rho family. As to expression, highly expressed in the embryonic cephalic mesoderm starting from stage 6 and fading by stage 11. Hemocyte precursor cells.

It is found in the cell membrane. Its function is as follows. Essential for the maturation of hemocytes. The chain is Ras-like GTP-binding protein RhoL (RhoL) from Drosophila melanogaster (Fruit fly).